We begin with the raw amino-acid sequence, 125 residues long: Fluoride-specific ion channel FluC (125 aa).

4 helical membrane passes run 1–21 (MIQA…RYYV), 32–52 (AFPW…GVFA), 68–88 (LLIT…LDAI), and 101–121 (IYIA…LAVM). Na(+)-binding residues include glycine 75 and threonine 78.

It belongs to the fluoride channel Fluc/FEX (TC 1.A.43) family.

The protein resides in the cell inner membrane. The enzyme catalyses fluoride(in) = fluoride(out). Na(+) is not transported, but it plays an essential structural role and its presence is essential for fluoride channel function. Functionally, fluoride-specific ion channel. Important for reducing fluoride concentration in the cell, thus reducing its toxicity. The protein is Fluoride-specific ion channel FluC of Rhizobium etli (strain CIAT 652).